A 326-amino-acid chain; its full sequence is GTP 3',8-cyclase (326 aa).

In terms of domain architecture, Radical SAM core spans 7–232; that stretch reads GFGRSFPYLR…PRAADAGPAR (226 aa). Arg16 contacts GTP. [4Fe-4S] cluster is bound by residues Cys23 and Cys27. Tyr29 is an S-adenosyl-L-methionine binding site. Cys30 serves as a coordination point for [4Fe-4S] cluster. GTP is bound at residue Arg65. Gly69 serves as a coordination point for S-adenosyl-L-methionine. Thr96 is a binding site for GTP. Ser120 lines the S-adenosyl-L-methionine pocket. A GTP-binding site is contributed by Lys157. Met191 contacts S-adenosyl-L-methionine. Residues Cys254 and Cys257 each contribute to the [4Fe-4S] cluster site. 259–261 serves as a coordination point for GTP; it reads RLR. Cys271 provides a ligand contact to [4Fe-4S] cluster.

This sequence belongs to the radical SAM superfamily. MoaA family. As to quaternary structure, monomer and homodimer. It depends on [4Fe-4S] cluster as a cofactor.

The catalysed reaction is GTP + AH2 + S-adenosyl-L-methionine = (8S)-3',8-cyclo-7,8-dihydroguanosine 5'-triphosphate + 5'-deoxyadenosine + L-methionine + A + H(+). It functions in the pathway cofactor biosynthesis; molybdopterin biosynthesis. Its function is as follows. Catalyzes the cyclization of GTP to (8S)-3',8-cyclo-7,8-dihydroguanosine 5'-triphosphate. The sequence is that of GTP 3',8-cyclase from Stenotrophomonas maltophilia (strain R551-3).